The following is a 249-amino-acid chain: tRNA pseudouridine synthase A (249 aa).

Residue Asp53 is the Nucleophile of the active site. A substrate-binding site is contributed by Tyr111.

This sequence belongs to the tRNA pseudouridine synthase TruA family. As to quaternary structure, homodimer.

It catalyses the reaction uridine(38/39/40) in tRNA = pseudouridine(38/39/40) in tRNA. Its function is as follows. Formation of pseudouridine at positions 38, 39 and 40 in the anticodon stem and loop of transfer RNAs. The sequence is that of tRNA pseudouridine synthase A from Streptococcus pyogenes serotype M1.